The sequence spans 330 residues: tRNA dimethylallyltransferase (330 aa).

Residues 1-11 (MDYSHSDSPST) show a composition bias toward polar residues. Residues 1 to 21 (MDYSHSDSPSTAPAGKTPVDQ) form a disordered region. Residue 29-36 (GPTGAGKS) participates in ATP binding. 31-36 (TGAGKS) contributes to the substrate binding site. Positions 56–59 (DSMQ) are interaction with substrate tRNA.

Belongs to the IPP transferase family. Monomer. Mg(2+) serves as cofactor.

It carries out the reaction adenosine(37) in tRNA + dimethylallyl diphosphate = N(6)-dimethylallyladenosine(37) in tRNA + diphosphate. Functionally, catalyzes the transfer of a dimethylallyl group onto the adenine at position 37 in tRNAs that read codons beginning with uridine, leading to the formation of N6-(dimethylallyl)adenosine (i(6)A). In Corynebacterium urealyticum (strain ATCC 43042 / DSM 7109), this protein is tRNA dimethylallyltransferase.